The chain runs to 513 residues: Cytochrome P450 monooxygenase asaD (513 aa).

A helical membrane pass occupies residues 14-34 (ILYPFLFGIFAVASLCIATLL). 4 N-linked (GlcNAc...) asparagine glycosylation sites follow: Asn-258, Asn-370, Asn-431, and Asn-441. Residue Cys-461 participates in heme binding.

This sequence belongs to the cytochrome P450 family. Heme serves as cofactor.

It is found in the membrane. Its pathway is secondary metabolite biosynthesis. Its function is as follows. Cytochrome P450 monooxygenase; part of the gene cluster that mediates the biosynthesis of aspergillic acid, a hydroxamic acid-containing pyrazinone with aliphatic side chains that originates from leucine (Leu) and isoleucine (Ile). Aspergillic acid has antibiotic properties and was shown to be lethal to mice. The first step in the pathway is the production of deoxyaspergillic acid via a condensation between the Ile amine and the Leu carboxylic acid, followed by a reductive release from the protein forming the dipeptide aldehyde NH(2)-Leu-Ile-CHO, which could undergo an intermolecular cyclization resulting in a dihydropyrazinone. As the NRPS asaC lacks a condensation domain, it is improbable that it is responsible for condensation of Leu and Ile. One possibility is that asaC acts on a previously condensed dipeptide and functions as a Leu-Ile reductase to yield deoxyaspergillic acid. After asaC forms deoxyaspergillic acid, the cytochrome P450 asaD oxidizes the pyrazinone to the hydroxamic acid-containing bioactive metabolite aspergillic acid. The hydroxylase/desaturase asaB can then convert aspergillic acid to hydroxyaspergillic acid. Both aspergillic acid and hydroxyaspergillic acid can form complexes with iron producing ferriaspergillin analogs. The polypeptide is Cytochrome P450 monooxygenase asaD (Aspergillus flavus (strain ATCC 200026 / FGSC A1120 / IAM 13836 / NRRL 3357 / JCM 12722 / SRRC 167)).